A 227-amino-acid chain; its full sequence is Phosphoribosylformylglycinamidine synthase subunit PurQ (227 aa).

The 223-residue stretch at 3-225 folds into the Glutamine amidotransferase type-1 domain; it reads FAVIVFPGSN…LKQWRETYVV (223 aa). Catalysis depends on Cys86, which acts as the Nucleophile. Active-site residues include His194 and Glu196.

Part of the FGAM synthase complex composed of 1 PurL, 1 PurQ and 2 PurS subunits.

The protein localises to the cytoplasm. It carries out the reaction N(2)-formyl-N(1)-(5-phospho-beta-D-ribosyl)glycinamide + L-glutamine + ATP + H2O = 2-formamido-N(1)-(5-O-phospho-beta-D-ribosyl)acetamidine + L-glutamate + ADP + phosphate + H(+). The catalysed reaction is L-glutamine + H2O = L-glutamate + NH4(+). It functions in the pathway purine metabolism; IMP biosynthesis via de novo pathway; 5-amino-1-(5-phospho-D-ribosyl)imidazole from N(2)-formyl-N(1)-(5-phospho-D-ribosyl)glycinamide: step 1/2. In terms of biological role, part of the phosphoribosylformylglycinamidine synthase complex involved in the purines biosynthetic pathway. Catalyzes the ATP-dependent conversion of formylglycinamide ribonucleotide (FGAR) and glutamine to yield formylglycinamidine ribonucleotide (FGAM) and glutamate. The FGAM synthase complex is composed of three subunits. PurQ produces an ammonia molecule by converting glutamine to glutamate. PurL transfers the ammonia molecule to FGAR to form FGAM in an ATP-dependent manner. PurS interacts with PurQ and PurL and is thought to assist in the transfer of the ammonia molecule from PurQ to PurL. The chain is Phosphoribosylformylglycinamidine synthase subunit PurQ from Bacillus cereus (strain B4264).